The following is a 549-amino-acid chain: Probable protein kinase UbiB (549 aa).

The Protein kinase domain occupies 123–501; the sequence is DFDDIPLASA…QQKAHKSNYL (379 aa). ATP contacts are provided by residues 129–137 and Lys-152; that span reads LASASISQV. Asp-287 functions as the Proton acceptor in the catalytic mechanism. 2 helical membrane-spanning segments follow: residues 498–518 and 520–540; these read SNYL…LINQ and ATLW…VLGW.

The protein belongs to the ABC1 family. UbiB subfamily.

It localises to the cell inner membrane. It participates in cofactor biosynthesis; ubiquinone biosynthesis [regulation]. In terms of biological role, is probably a protein kinase regulator of UbiI activity which is involved in aerobic coenzyme Q (ubiquinone) biosynthesis. In Shewanella halifaxensis (strain HAW-EB4), this protein is Probable protein kinase UbiB.